A 746-amino-acid chain; its full sequence is Catalase-peroxidase (746 aa).

Residues 1-20 (MSSDTSSSRPPQPDSGTASK) show a composition bias toward polar residues. The segment at 1 to 42 (MSSDTSSSRPPQPDSGTASKSESENPAIPSPKPKAHAPLTNR) is disordered. The segment at residues 113–236 (WHAAGTYRIH…YGATTMGLIY (124 aa)) is a cross-link (tryptophyl-tyrosyl-methioninium (Trp-Tyr) (with M-262)). The active-site Proton acceptor is the His114. The segment at residues 236 to 262 (YVNPEGPEGKPDPIAAAIDIRETFGRM) is a cross-link (tryptophyl-tyrosyl-methioninium (Tyr-Met) (with W-113)). Position 277 (His277) interacts with heme b.

The protein belongs to the peroxidase family. Peroxidase/catalase subfamily. As to quaternary structure, homodimer or homotetramer. Requires heme b as cofactor. Post-translationally, formation of the three residue Trp-Tyr-Met cross-link is important for the catalase, but not the peroxidase activity of the enzyme.

The catalysed reaction is H2O2 + AH2 = A + 2 H2O. It catalyses the reaction 2 H2O2 = O2 + 2 H2O. Bifunctional enzyme with both catalase and broad-spectrum peroxidase activity. May play a role in the intracellular survival of mycobacteria. The polypeptide is Catalase-peroxidase (Mycobacterium intracellulare).